A 137-amino-acid chain; its full sequence is Acidic phospholipase A2 PL-II (137 aa).

Positions 1–17 are cleaved as a signal peptide; sequence AVCVSLLGASSIRPLPL. Cystine bridges form between cysteine 28-cysteine 89, cysteine 44-cysteine 136, cysteine 46-cysteine 62, cysteine 61-cysteine 117, cysteine 68-cysteine 110, cysteine 78-cysteine 103, and cysteine 96-cysteine 108. 3 residues coordinate Ca(2+): tyrosine 45, glycine 47, and glycine 49. Histidine 65 is an active-site residue. A Ca(2+)-binding site is contributed by aspartate 66. Aspartate 111 is a catalytic residue.

Ca(2+) is required as a cofactor. In terms of tissue distribution, expressed by the venom gland.

It is found in the secreted. It catalyses the reaction a 1,2-diacyl-sn-glycero-3-phosphocholine + H2O = a 1-acyl-sn-glycero-3-phosphocholine + a fatty acid + H(+). Its function is as follows. Snake venom phospholipase A2 (PLA2) that may act in the hemostasis system of the prey. Exhibits hydrolytic activities, and prefers the anionic micelles (dPPC with deoxycholate) (54 umol/mg/min) to the zwitterionic micelles (dPPC with Triton X-100) (15 umol/mg/min). PLA2 catalyzes the calcium-dependent hydrolysis of the 2-acyl groups in 3-sn-phosphoglycerides. This is Acidic phospholipase A2 PL-II from Walterinnesia aegyptia (Desert black snake).